Here is a 251-residue protein sequence, read N- to C-terminus: Ubiquinone/menaquinone biosynthesis C-methyltransferase UbiE (251 aa).

Residues Thr74, Asp95, and 123 to 124 (NA) each bind S-adenosyl-L-methionine.

Belongs to the class I-like SAM-binding methyltransferase superfamily. MenG/UbiE family.

The enzyme catalyses a 2-demethylmenaquinol + S-adenosyl-L-methionine = a menaquinol + S-adenosyl-L-homocysteine + H(+). It carries out the reaction a 2-methoxy-6-(all-trans-polyprenyl)benzene-1,4-diol + S-adenosyl-L-methionine = a 5-methoxy-2-methyl-3-(all-trans-polyprenyl)benzene-1,4-diol + S-adenosyl-L-homocysteine + H(+). It participates in quinol/quinone metabolism; menaquinone biosynthesis; menaquinol from 1,4-dihydroxy-2-naphthoate: step 2/2. It functions in the pathway cofactor biosynthesis; ubiquinone biosynthesis. Methyltransferase required for the conversion of demethylmenaquinol (DMKH2) to menaquinol (MKH2) and the conversion of 2-polyprenyl-6-methoxy-1,4-benzoquinol (DDMQH2) to 2-polyprenyl-3-methyl-6-methoxy-1,4-benzoquinol (DMQH2). The sequence is that of Ubiquinone/menaquinone biosynthesis C-methyltransferase UbiE from Erwinia tasmaniensis (strain DSM 17950 / CFBP 7177 / CIP 109463 / NCPPB 4357 / Et1/99).